The primary structure comprises 244 residues: Carboxy-S-adenosyl-L-methionine synthase (244 aa).

Residues Y40, 65–67 (GCS), 90–91 (DN), 119–120 (DL), N134, and R201 contribute to the S-adenosyl-L-methionine site.

This sequence belongs to the class I-like SAM-binding methyltransferase superfamily. Cx-SAM synthase family. In terms of assembly, homodimer.

It carries out the reaction prephenate + S-adenosyl-L-methionine = carboxy-S-adenosyl-L-methionine + 3-phenylpyruvate + H2O. Catalyzes the conversion of S-adenosyl-L-methionine (SAM) to carboxy-S-adenosyl-L-methionine (Cx-SAM). This is Carboxy-S-adenosyl-L-methionine synthase from Trichlorobacter lovleyi (strain ATCC BAA-1151 / DSM 17278 / SZ) (Geobacter lovleyi).